Reading from the N-terminus, the 531-residue chain is Arginine--tRNA ligase (531 aa).

Residues 113 to 123 carry the 'HIGH' region motif; the sequence is ANPTGPLHIGH.

This sequence belongs to the class-I aminoacyl-tRNA synthetase family. Monomer.

Its subcellular location is the cytoplasm. It catalyses the reaction tRNA(Arg) + L-arginine + ATP = L-arginyl-tRNA(Arg) + AMP + diphosphate. In Campylobacter fetus subsp. fetus (strain 82-40), this protein is Arginine--tRNA ligase.